The sequence spans 73 residues: Putative membrane protein insertion efficiency factor (73 aa).

Belongs to the UPF0161 family.

It is found in the cell inner membrane. Could be involved in insertion of integral membrane proteins into the membrane. The polypeptide is Putative membrane protein insertion efficiency factor (Rickettsia bellii (strain RML369-C)).